Here is a 94-residue protein sequence, read N- to C-terminus: Integration host factor subunit beta (94 aa).

Belongs to the bacterial histone-like protein family. As to quaternary structure, heterodimer of an alpha and a beta chain.

Functionally, this protein is one of the two subunits of integration host factor, a specific DNA-binding protein that functions in genetic recombination as well as in transcriptional and translational control. This chain is Integration host factor subunit beta, found in Brucella anthropi (strain ATCC 49188 / DSM 6882 / CCUG 24695 / JCM 21032 / LMG 3331 / NBRC 15819 / NCTC 12168 / Alc 37) (Ochrobactrum anthropi).